We begin with the raw amino-acid sequence, 119 residues long: Large ribosomal subunit protein bL20 (119 aa).

It belongs to the bacterial ribosomal protein bL20 family.

Binds directly to 23S ribosomal RNA and is necessary for the in vitro assembly process of the 50S ribosomal subunit. It is not involved in the protein synthesizing functions of that subunit. This is Large ribosomal subunit protein bL20 from Streptococcus pneumoniae serotype 2 (strain D39 / NCTC 7466).